The primary structure comprises 176 residues: PRELI domain-containing protein 2 (176 aa).

Residues 1–175 (MGIAVEARKV…ILRERCGCPF (175 aa)) form the PRELI/MSF1 domain.

The sequence is that of PRELI domain-containing protein 2 (prelid2) from Xenopus tropicalis (Western clawed frog).